The chain runs to 419 residues: L-rhamnose isomerase (419 aa).

Mn(2+) contacts are provided by H262, D294, and D296.

It belongs to the rhamnose isomerase family. In terms of assembly, homotetramer. Mn(2+) serves as cofactor.

It is found in the cytoplasm. It catalyses the reaction L-rhamnopyranose = L-rhamnulose. It functions in the pathway carbohydrate degradation; L-rhamnose degradation; glycerone phosphate from L-rhamnose: step 1/3. In terms of biological role, catalyzes the interconversion of L-rhamnose and L-rhamnulose. The polypeptide is L-rhamnose isomerase (Escherichia coli O9:H4 (strain HS)).